Reading from the N-terminus, the 417-residue chain is MSLTNKLSIKDLDLKNKRVFIRVDFNVPLDGTTITNNQRIVAALPSIKYAIDQGAKAVILASHLGRPNGQRVEKYSLKPVQAELSKLLGKPVTFLDDCVGPKVEEEVSKAKDGEVILLENLRFHPEEEGSHKDADGKKIKADPAKVEEFRKSLTSLADVYVNDAFGTAHRAHSSMVGIELPQRAAGFLVAKELEFFAKALEHPERPFLAILGGAKVSDKIQLIDNLLDKVNALIIGGGMAFTFKKTLENVKIGNSLFDEDGSKIVAGLVEKAKKNNVKLVFPVDYVTADKFSKDAKVGHATDAEGIPDGWQGLDCGPKSIEEFQKVIGESKTILWNGPPGVFEFDNFAKGTKAVLDACVKAVDNGATVIIGGGDTATVAKKYGAEDKLSHVSTGGGASLELLEGKTLPGVAALSEKK.

Residues V23, D24, F25, N26, Q38, R39, S62, H63, G65, R66, L121, R122, H169, and R170 each coordinate (2R)-3-phosphoglycerate. An ADP-binding site is contributed by G213. G213 contributes to the CDP binding site. AMP is bound by residues A214 and K215. A214 provides a ligand contact to ATP. A Mg(2+)-binding site is contributed by A214. D218 is a binding site for CDP. D218 lines the Mg(2+) pocket. K219 provides a ligand contact to AMP. K219 lines the ATP pocket. ADP is bound at residue G237. G237 provides a ligand contact to CDP. 2 residues coordinate AMP: G238 and G312. ATP-binding residues include G238 and G312. CDP-binding residues include G337 and F342. F342 serves as a coordination point for ADP. E343 provides a ligand contact to AMP. ATP-binding residues include E343, D374, and T375. Residue D374 participates in Mg(2+) binding.

Belongs to the phosphoglycerate kinase family. As to quaternary structure, monomer. Requires Mg(2+) as cofactor.

The protein localises to the cytoplasm. It localises to the mitochondrion. It catalyses the reaction (2R)-3-phosphoglycerate + ATP = (2R)-3-phospho-glyceroyl phosphate + ADP. It functions in the pathway carbohydrate degradation; glycolysis; pyruvate from D-glyceraldehyde 3-phosphate: step 2/5. Functionally, catalyzes one of the two ATP producing reactions in the glycolytic pathway via the reversible conversion of 1,3-diphosphoglycerate to 3-phosphoglycerate. Both L- and D- forms of purine and pyrimidine nucleotides can be used as substrates, but the activity is much lower on pyrimidines. Negatively regulates the biosynthesis of acetyl-CoA from pyruvate in the mitochondrion. The sequence is that of Phosphoglycerate kinase (PGK1) from Yarrowia lipolytica (strain CLIB 122 / E 150) (Yeast).